Consider the following 400-residue polypeptide: GTPase-binding protein rid1 (400 aa).

Polar residues predominate over residues 16–27; the sequence is LSSDGLSESVNS. Positions 16–47 are disordered; the sequence is LSSDGLSESVNSSDREDSLSFQTPSTPSEDEM. The region spanning 39-400 is the GBD/FH3 domain; that stretch reads PSTPSEDEMP…PYKLVQTGST (362 aa).

The protein resides in the cytoplasm. This chain is GTPase-binding protein rid1 (rid1), found in Schizosaccharomyces pombe (strain 972 / ATCC 24843) (Fission yeast).